We begin with the raw amino-acid sequence, 284 residues long: ADP-polyphosphate phosphotransferase 3 (284 aa).

Composition is skewed to basic and acidic residues over residues 1 to 22 and 260 to 277; these read MDKH…RKSA and DLGK…DTRR. Disordered regions lie at residues 1–32 and 260–284; these read MDKH…TRSG and DLGK…PNLF.

The protein belongs to the polyphosphate kinase 2 (PPK2) family. Class I subfamily.

It carries out the reaction [phosphate](n) + ATP = [phosphate](n+1) + ADP. The catalysed reaction is [phosphate](n) + GTP = [phosphate](n+1) + GDP. In terms of biological role, uses inorganic polyphosphate (polyP) as a donor to convert ADP to ATP. Can also convert GDP to GTP, with lower efficiency. The polypeptide is ADP-polyphosphate phosphotransferase 3 (Rhizobium meliloti (strain 1021) (Ensifer meliloti)).